The sequence spans 432 residues: Glutamate-1-semialdehyde 2,1-aminomutase (432 aa).

At lysine 272 the chain carries N6-(pyridoxal phosphate)lysine.

The protein belongs to the class-III pyridoxal-phosphate-dependent aminotransferase family. HemL subfamily. As to quaternary structure, homodimer. It depends on pyridoxal 5'-phosphate as a cofactor.

The protein resides in the cytoplasm. It catalyses the reaction (S)-4-amino-5-oxopentanoate = 5-aminolevulinate. The protein operates within porphyrin-containing compound metabolism; protoporphyrin-IX biosynthesis; 5-aminolevulinate from L-glutamyl-tRNA(Glu): step 2/2. It participates in porphyrin-containing compound metabolism; chlorophyll biosynthesis. This chain is Glutamate-1-semialdehyde 2,1-aminomutase, found in Trichormus variabilis (strain ATCC 29413 / PCC 7937) (Anabaena variabilis).